Reading from the N-terminus, the 125-residue chain is Small ribosomal subunit protein bS6 (125 aa).

The protein belongs to the bacterial ribosomal protein bS6 family.

Binds together with bS18 to 16S ribosomal RNA. In Campylobacter jejuni subsp. jejuni serotype O:2 (strain ATCC 700819 / NCTC 11168), this protein is Small ribosomal subunit protein bS6 (rpsF).